Consider the following 58-residue polypeptide: Photosystem II reaction center protein K (58 aa).

The propeptide occupies 1–21 (MLVISNVYPSNLFTLINPFFA). A helical transmembrane segment spans residues 29–49 (IFDPIVDVMPIIPVFFFLLAF).

It belongs to the PsbK family. PSII is composed of 1 copy each of membrane proteins PsbA, PsbB, PsbC, PsbD, PsbE, PsbF, PsbH, PsbI, PsbJ, PsbK, PsbL, PsbM, PsbT, PsbX, PsbY, PsbZ, Psb30/Ycf12, at least 3 peripheral proteins of the oxygen-evolving complex and a large number of cofactors. It forms dimeric complexes.

The protein resides in the plastid. The protein localises to the chloroplast thylakoid membrane. One of the components of the core complex of photosystem II (PSII). PSII is a light-driven water:plastoquinone oxidoreductase that uses light energy to abstract electrons from H(2)O, generating O(2) and a proton gradient subsequently used for ATP formation. It consists of a core antenna complex that captures photons, and an electron transfer chain that converts photonic excitation into a charge separation. The chain is Photosystem II reaction center protein K from Psilotum nudum (Whisk fern).